A 320-amino-acid polypeptide reads, in one-letter code: D-amino-acid oxidase (320 aa).

12 residues coordinate FAD: glycine 18, glycine 19, valine 20, isoleucine 21, threonine 47, threonine 48, serine 49, glycine 53, glycine 54, leucine 55, valine 161, and threonine 176. 2 residues coordinate D-proline: tyrosine 220 and arginine 275. 2 residues coordinate D-serine: tyrosine 220 and arginine 275. 5 residues coordinate FAD: arginine 275, glycine 301, glycine 302, glycine 304, and threonine 306. Glycine 302 is a D-proline binding site. A D-serine-binding site is contributed by glycine 302.

The protein belongs to the DAMOX/DASOX family. FAD is required as a cofactor.

The protein resides in the cytoplasm. The protein localises to the secreted. It is found in the cell wall. It catalyses the reaction a D-alpha-amino acid + O2 + H2O = a 2-oxocarboxylate + H2O2 + NH4(+). The enzyme catalyses D-leucine + O2 + H2O = 4-methyl-2-oxopentanoate + H2O2 + NH4(+). It carries out the reaction D-valine + O2 + H2O = 3-methyl-2-oxobutanoate + H2O2 + NH4(+). The catalysed reaction is D-isoleucine + O2 + H2O = (R)-3-methyl-2-oxopentanoate + H2O2 + NH4(+). It catalyses the reaction D-methionine + O2 + H2O = 4-methylsulfanyl-2-oxobutanoate + H2O2 + NH4(+). Its function is as follows. Catalyzes the oxidative deamination of D-amino acids with broad substrate specificity. The chain is D-amino-acid oxidase from Streptomyces coelicolor (strain ATCC BAA-471 / A3(2) / M145).